Consider the following 20-residue polypeptide: Thylakoid lumenal 20 kDa protein (20 aa).

Positions 1–20 (RDVDVGSFLPKSPSDPSMVL) are disordered.

Its subcellular location is the plastid. The protein localises to the chloroplast thylakoid lumen. The protein is Thylakoid lumenal 20 kDa protein of Spinacia oleracea (Spinach).